Consider the following 160-residue polypeptide: NADH-quinone oxidoreductase subunit B (160 aa).

4 residues coordinate [4Fe-4S] cluster: Cys37, Cys38, Cys102, and Cys132.

This sequence belongs to the complex I 20 kDa subunit family. In terms of assembly, NDH-1 is composed of 14 different subunits. Subunits NuoB, C, D, E, F, and G constitute the peripheral sector of the complex. Requires [4Fe-4S] cluster as cofactor.

It localises to the cell inner membrane. It catalyses the reaction a quinone + NADH + 5 H(+)(in) = a quinol + NAD(+) + 4 H(+)(out). NDH-1 shuttles electrons from NADH, via FMN and iron-sulfur (Fe-S) centers, to quinones in the respiratory chain. Couples the redox reaction to proton translocation (for every two electrons transferred, four hydrogen ions are translocated across the cytoplasmic membrane), and thus conserves the redox energy in a proton gradient. This Neisseria gonorrhoeae (strain ATCC 700825 / FA 1090) protein is NADH-quinone oxidoreductase subunit B.